We begin with the raw amino-acid sequence, 233 residues long: Orotidine 5'-phosphate decarboxylase (233 aa).

Substrate contacts are provided by residues D11, K33, D60 to T69, T120, R181, Q190, G210, and R211. The active-site Proton donor is K62.

Belongs to the OMP decarboxylase family. Type 1 subfamily. Homodimer.

It carries out the reaction orotidine 5'-phosphate + H(+) = UMP + CO2. It functions in the pathway pyrimidine metabolism; UMP biosynthesis via de novo pathway; UMP from orotate: step 2/2. In terms of biological role, catalyzes the decarboxylation of orotidine 5'-monophosphate (OMP) to uridine 5'-monophosphate (UMP). In Vibrio campbellii (strain ATCC BAA-1116), this protein is Orotidine 5'-phosphate decarboxylase.